We begin with the raw amino-acid sequence, 110 residues long: Parvalbumin alpha (110 aa).

Residue serine 2 is modified to N-acetylserine. Serine 2, serine 8, and serine 24 each carry phosphoserine. EF-hand domains are found at residues 39 to 74 (KNPD…FSSD) and 78 to 110 (LSAK…VAES). Aspartate 52, aspartate 54, serine 56, phenylalanine 58, glutamate 60, glutamate 63, aspartate 91, aspartate 93, aspartate 95, lysine 97, and glutamate 102 together coordinate Ca(2+).

As to expression, expressed in the modiolar nerve root (at protein level).

Functionally, in muscle, parvalbumin is thought to be involved in relaxation after contraction. It binds two calcium ions. The sequence is that of Parvalbumin alpha (Pvalb) from Mus musculus (Mouse).